Consider the following 468-residue polypeptide: UDP-N-acetylmuramoyl-L-alanine--L-glutamate ligase (468 aa).

Gly-122–Thr-128 contacts ATP.

This sequence belongs to the MurCDEF family. MurD2 subfamily.

The protein resides in the cytoplasm. The enzyme catalyses UDP-N-acetyl-alpha-D-muramoyl-L-alanine + L-glutamate + ATP = UDP-N-acetyl-alpha-D-muramoyl-L-alanyl-L-glutamate + ADP + phosphate + H(+). Its pathway is cell wall biogenesis; peptidoglycan biosynthesis. Functionally, cell wall formation. Catalyzes the addition of L-glutamate to the nucleotide precursor UDP-N-acetylmuramoyl-L-alanine. This is UDP-N-acetylmuramoyl-L-alanine--L-glutamate ligase from Xanthomonas axonopodis pv. citri (strain 306).